Here is a 97-residue protein sequence, read N- to C-terminus: Early nodulin-75 (97 aa).

The segment at 1-97 is disordered; the sequence is RPHVHPPPEH…PEYQPPHEKP (97 aa). Composition is skewed to pro residues over residues 9–22 and 31–43; these read EHQP…PEYQ and VHPP…PYQK. The span at 76–97 shows a compositional bias: basic and acidic residues; sequence PPHEKPPHEHPPPEYQPPHEKP.

The protein belongs to the nodulin 75 family.

In terms of biological role, involved in early stages of root nodule development. This Medicago sativa (Alfalfa) protein is Early nodulin-75 (ENOD2).